We begin with the raw amino-acid sequence, 132 residues long: Small ribosomal subunit protein uS8 (132 aa).

This sequence belongs to the universal ribosomal protein uS8 family. As to quaternary structure, part of the 30S ribosomal subunit. Contacts proteins S5 and S12.

In terms of biological role, one of the primary rRNA binding proteins, it binds directly to 16S rRNA central domain where it helps coordinate assembly of the platform of the 30S subunit. In Clostridium botulinum (strain ATCC 19397 / Type A), this protein is Small ribosomal subunit protein uS8.